The following is a 289-amino-acid chain: MANGYTYEDYQDTAKWLLSHTEQRPQVAVICGSGLGGLVNKLTQAQTFDYSEIPNFPESTVPGHAGRLVFGILNGRACVMMQGRFHMYEGYPFWKVTFPVRVFRLLGVETLVVTNAAGGLNPNFEVGDIMLIRDHINLPGFSGENPLRGPNEERFGVRFPAMSDAYDRDMRQKAHSTWKQMGEQRELQEGTYVMLGGPNFETVAECRLLRNLGADAVGMSTVPEVIVARHCGLRVFGFSLITNKVIMDYESQGKANHEEVLEAGKQAAQKLEQFVSLLMASIPVSGHTG.

The residue at position 1 (M1) is an N-acetylmethionine. Phosphate contacts are provided by residues S33, H64, and 84-86 (RFH). Position 88 (Y88) interacts with a purine D-ribonucleoside. A116 contacts phosphate. Positions 201 and 219 each coordinate a purine D-ribonucleoside. S220 is a binding site for phosphate. N243 contributes to the a purine D-ribonucleoside binding site. The residue at position 251 (S251) is a Phosphoserine. H257 lines the a purine D-ribonucleoside pocket.

This sequence belongs to the PNP/MTAP phosphorylase family. As to quaternary structure, homotrimer.

Its subcellular location is the cytoplasm. It carries out the reaction inosine + phosphate = alpha-D-ribose 1-phosphate + hypoxanthine. The catalysed reaction is guanosine + phosphate = alpha-D-ribose 1-phosphate + guanine. The enzyme catalyses 2'-deoxyguanosine + phosphate = 2-deoxy-alpha-D-ribose 1-phosphate + guanine. It catalyses the reaction 2'-deoxyinosine + phosphate = 2-deoxy-alpha-D-ribose 1-phosphate + hypoxanthine. The protein operates within purine metabolism; purine nucleoside salvage. Catalyzes the phosphorolytic breakdown of the N-glycosidic bond in the beta-(deoxy)ribonucleoside molecules, with the formation of the corresponding free purine bases and pentose-1-phosphate. Preferentially acts on 6-oxopurine nucleosides including inosine and guanosine. This is Purine nucleoside phosphorylase (PNP) from Bos taurus (Bovine).